Reading from the N-terminus, the 266-residue chain is uncharacterized protein (266 aa).

Serine 176 is subject to Phosphoserine. Residue threonine 178 is modified to Phosphothreonine.

This is an uncharacterized protein from Schizosaccharomyces pombe (strain 972 / ATCC 24843) (Fission yeast).